The following is a 130-amino-acid chain: MSMQDPIADMLTRIRNAQMVGKTSVTMPSSKLKKSVANVLTEEGYVAGFNATDGVKAELTIDLKYFEGKPVIAELDRISRPGLRAYAGKDELPTVRGGLGIAIVSTSKGVMTDRAARAAGVGGEIICTVF.

The protein belongs to the universal ribosomal protein uS8 family. In terms of assembly, part of the 30S ribosomal subunit. Contacts proteins S5 and S12.

In terms of biological role, one of the primary rRNA binding proteins, it binds directly to 16S rRNA central domain where it helps coordinate assembly of the platform of the 30S subunit. This is Small ribosomal subunit protein uS8 from Teredinibacter turnerae (strain ATCC 39867 / T7901).